Consider the following 205-residue polypeptide: Holliday junction branch migration complex subunit RuvA (205 aa).

The interval 1–64 is domain I; it reads MIGRLRGVLV…EDAQLLYGFI (64 aa). The tract at residues 65-143 is domain II; sequence TKQERALFRL…SLLETSAGSE (79 aa). Positions 144-156 are flexible linker; the sequence is REFMLKSNYTPAP. The segment at 157–205 is domain III; sequence VVNTAEEDAIAALLSLGYKPAQASKAVSAAFKEGMSSEDLIKSSLKSML.

This sequence belongs to the RuvA family. In terms of assembly, homotetramer. Forms an RuvA(8)-RuvB(12)-Holliday junction (HJ) complex. HJ DNA is sandwiched between 2 RuvA tetramers; dsDNA enters through RuvA and exits via RuvB. An RuvB hexamer assembles on each DNA strand where it exits the tetramer. Each RuvB hexamer is contacted by two RuvA subunits (via domain III) on 2 adjacent RuvB subunits; this complex drives branch migration. In the full resolvosome a probable DNA-RuvA(4)-RuvB(12)-RuvC(2) complex forms which resolves the HJ.

The protein localises to the cytoplasm. In terms of biological role, the RuvA-RuvB-RuvC complex processes Holliday junction (HJ) DNA during genetic recombination and DNA repair, while the RuvA-RuvB complex plays an important role in the rescue of blocked DNA replication forks via replication fork reversal (RFR). RuvA specifically binds to HJ cruciform DNA, conferring on it an open structure. The RuvB hexamer acts as an ATP-dependent pump, pulling dsDNA into and through the RuvAB complex. HJ branch migration allows RuvC to scan DNA until it finds its consensus sequence, where it cleaves and resolves the cruciform DNA. The sequence is that of Holliday junction branch migration complex subunit RuvA from Shewanella woodyi (strain ATCC 51908 / MS32).